A 512-amino-acid chain; its full sequence is MQPDLTPNPAPPLIALTGIGKRFPGVQALDDCHFDLRAGEVHALMGENGAGKSTLMKILAGVYQRDDGEIRMDGRAVEIADPRAAQALGIGIIHQELNLMNHLSVAQNIFIGREPRGRFGVFVDEAALNRDAAAIFARMRLDLDPRTPVGQLTVAKQQMVEIAKALSFDSRVLIMDEPTAALNNAEIAELFRIIGDLRAHGVGIVYISHKMDELRQIADRVTVMRDGKYVATVPMADTSMDAIIAMMVGRQLATEFRTPPDTSANDVALEVRGLSRGRAIRDVGFTLRRGEILGFAGLMGAGRTEVARAVFGADPVDAGEIRVHGKTVSIRSPADAVRHGIGYLSEDRKHFGLAVGMDVQNNIALSSMRRFVRRGLFLDARALRDTAQSYVRQLAIRTPSVTQPARLLSGGNQQKIVIAKWLLRDCDILFFDEPTRGIDVGAKSEIYKLLDALAADGKAIVMISSELPEVLRMSHRILVMCEGRVTGELRAADATQEKIMQLATQRESTVLS.

2 ABC transporter domains span residues 14–251 (IALT…VGRQ) and 262–507 (TSAN…TQRE). 46-53 (GENGAGKS) serves as a coordination point for ATP.

The protein belongs to the ABC transporter superfamily. Carbohydrate importer 2 (CUT2) (TC 3.A.1.2) family.

The protein localises to the cell inner membrane. It catalyses the reaction D-ribose(out) + ATP + H2O = D-ribose(in) + ADP + phosphate + H(+). The enzyme catalyses D-galactose(out) + ATP + H2O = D-galactose(in) + ADP + phosphate + H(+). Part of an ABC transporter complex involved in carbohydrate import. Could be involved in ribose, galactose and/or methyl galactoside import. Responsible for energy coupling to the transport system. This Burkholderia lata (strain ATCC 17760 / DSM 23089 / LMG 22485 / NCIMB 9086 / R18194 / 383) protein is Putative ribose/galactose/methyl galactoside import ATP-binding protein 1.